The sequence spans 276 residues: F-actin-capping protein subunit alpha (276 aa).

The protein belongs to the F-actin-capping protein alpha subunit family. As to quaternary structure, heterodimer of an alpha and a beta subunit.

It is found in the cytoplasm. The protein resides in the cytoskeleton. In terms of biological role, F-actin-capping proteins bind in a Ca(2+)-independent manner to the fast growing ends of actin filaments (barbed end) thereby blocking the exchange of subunits at these ends. Unlike other capping proteins (such as gelsolin and severin), these proteins do not sever actin filaments. The chain is F-actin-capping protein subunit alpha (cap1) from Aspergillus fumigatus (strain ATCC MYA-4609 / CBS 101355 / FGSC A1100 / Af293) (Neosartorya fumigata).